We begin with the raw amino-acid sequence, 177 residues long: Sec-independent protein translocase protein TatB (177 aa).

A helical transmembrane segment spans residues 1 to 21 (MFDFAWSEIAVIGVVALVVIG). Residues 136-146 (REKTVSSETAR) show a composition bias toward basic and acidic residues. The disordered stretch occupies residues 136 to 177 (REKTVSSETARRAATAPAFIPPGEAFRSARRAPAFIPPADQG).

It belongs to the TatB family. As to quaternary structure, the Tat system comprises two distinct complexes: a TatABC complex, containing multiple copies of TatA, TatB and TatC subunits, and a separate TatA complex, containing only TatA subunits. Substrates initially bind to the TatABC complex, which probably triggers association of the separate TatA complex to form the active translocon.

The protein localises to the cell inner membrane. Its function is as follows. Part of the twin-arginine translocation (Tat) system that transports large folded proteins containing a characteristic twin-arginine motif in their signal peptide across membranes. Together with TatC, TatB is part of a receptor directly interacting with Tat signal peptides. TatB may form an oligomeric binding site that transiently accommodates folded Tat precursor proteins before their translocation. In Granulibacter bethesdensis (strain ATCC BAA-1260 / CGDNIH1), this protein is Sec-independent protein translocase protein TatB.